A 507-amino-acid chain; its full sequence is Histidine ammonia-lyase (507 aa).

The segment at residues 142-144 (ASG) is a cross-link (5-imidazolinone (Ala-Gly)). 2,3-didehydroalanine (Ser) is present on Ser-143.

This sequence belongs to the PAL/histidase family. Post-translationally, contains an active site 4-methylidene-imidazol-5-one (MIO), which is formed autocatalytically by cyclization and dehydration of residues Ala-Ser-Gly.

Its subcellular location is the cytoplasm. It carries out the reaction L-histidine = trans-urocanate + NH4(+). It participates in amino-acid degradation; L-histidine degradation into L-glutamate; N-formimidoyl-L-glutamate from L-histidine: step 1/3. The sequence is that of Histidine ammonia-lyase from Maricaulis maris (strain MCS10) (Caulobacter maris).